Consider the following 359-residue polypeptide: UDP-3-O-acylglucosamine N-acyltransferase (359 aa).

H247 (proton acceptor) is an active-site residue.

The protein belongs to the transferase hexapeptide repeat family. LpxD subfamily. In terms of assembly, homotrimer.

It carries out the reaction a UDP-3-O-[(3R)-3-hydroxyacyl]-alpha-D-glucosamine + a (3R)-hydroxyacyl-[ACP] = a UDP-2-N,3-O-bis[(3R)-3-hydroxyacyl]-alpha-D-glucosamine + holo-[ACP] + H(+). It functions in the pathway bacterial outer membrane biogenesis; LPS lipid A biosynthesis. In terms of biological role, catalyzes the N-acylation of UDP-3-O-acylglucosamine using 3-hydroxyacyl-ACP as the acyl donor. Is involved in the biosynthesis of lipid A, a phosphorylated glycolipid that anchors the lipopolysaccharide to the outer membrane of the cell. The protein is UDP-3-O-acylglucosamine N-acyltransferase of Chlorobium chlorochromatii (strain CaD3).